The primary structure comprises 93 residues: Large ribosomal subunit protein uL23cz/uL23cy (93 aa).

The protein belongs to the universal ribosomal protein uL23 family. As to quaternary structure, part of the 50S ribosomal subunit.

The protein localises to the plastid. Its subcellular location is the chloroplast. In terms of biological role, binds to 23S rRNA. The protein is Large ribosomal subunit protein uL23cz/uL23cy (rpl23-A) of Glycine max (Soybean).